The chain runs to 359 residues: Apelin receptor B (359 aa).

Topologically, residues 1 to 36 are extracellular; the sequence is MNAMDNMTADYSPDYFDDAVNSSMCEYDEWEPSYSL. Asn6 and Asn21 each carry an N-linked (GlcNAc...) asparagine glycan. Intrachain disulfides connect Cys25/Cys288 and Cys107/Cys186. The chain crosses the membrane as a helical span at residues 37–57; it reads IPVLYMLIFILGLTGNGVVIF. Over 58 to 75 the chain is Cytoplasmic; that stretch reads TVWRAQSKRRAADVYIGN. A helical membrane pass occupies residues 76–96; sequence LALADLTFVVTLPLWAVYTAL. The Extracellular portion of the chain corresponds to 97–108; it reads GYHWPFGVALCK. The chain crosses the membrane as a helical span at residues 109 to 129; the sequence is ISSYVVLLNMYASVFCLTCLS. Topologically, residues 130–151 are cytoplasmic; the sequence is LDRYMAIVHSLTSTQLRTRGHM. Residues 152–172 traverse the membrane as a helical segment; the sequence is RASLTAIWLLSGVLAAPTLLF. The Extracellular portion of the chain corresponds to 173 to 213; that stretch reads RTTVYDVETNRTSCAMDFNLVVSQPGQETYWIAGLSISSTA. Residue Asn182 is glycosylated (N-linked (GlcNAc...) asparagine). A helical transmembrane segment spans residues 214–234; that stretch reads LGFLIPLLAMMVCYGFIGCTV. Residues 235 to 251 are Cytoplasmic-facing; it reads TRHFNSLRKEDQRKRRL. A helical membrane pass occupies residues 252–272; sequence LKIITTLVVVFAACWMPFHVV. Residues 273 to 286 are Extracellular-facing; the sequence is KTMDALSYLNLAPD. The chain crosses the membrane as a helical span at residues 287 to 307; the sequence is SCTFLNLLLLAHPYATCLAYV. At 308–359 the chain is on the cytoplasmic side; sequence NSCLNPLLYAFFDLRFRSQCLCLLNLKKALHASPASSLSSQKTEAQSLATKV.

This sequence belongs to the G-protein coupled receptor 1 family. In terms of tissue distribution, mesendodermal expression at the blastoderm margin appears by 4.5 hpf. At early gastrulation, expression is maintained ventrolaterally while expression in dorsal cells and random deep cells declines. During gastrulation and segmentation, expression is maintained in adaxial, intermediate, and lateral plate mesoderm. During late segmentation, expressed in several regions including the forming heart. By 24 hpf, expressed in the dorsal aorta, caudal vein, and intersomitic blood vessels.

It localises to the cell membrane. Its function is as follows. G protein-coupled receptor for peptide hormones apelin (apln) and apelin receptor early endogenous ligand (apela), that plays a role in the regulation of normal cardiovascular function and fluid homeostasis. When acting as apelin receptor, activates both G(i) protein pathway that inhibits adenylate cyclase activity, and the beta-arrestin pathway that promotes internalization of the receptor. Also functions as mechanoreceptor that is activated by pathological stimuli in a G-protein-independent fashion to induce beta-arrestin signaling, hence eliciting cardiac hypertrophy. However, the presence of apelin ligand blunts cardiac hypertrophic induction from APLNR/APJ on response to pathological stimuli. Plays a key role in early development such as gastrulation, blood vessels formation and heart morphogenesis by acting as a receptor for apela hormone, promoting endoderm and mesendoderm cell migration and regulating the migration of cells fated to become myocardial progenitors, respectively. Positively regulates angioblast migration toward the embryonic midline, i.e. the position of the future vessel formation, during vasculogenesis. May promote sinus venosus (SV)-derived endothelial cells migration into the developing heart to promote coronary blood vessel development. Required for cardiovascular development, particularly for intersomitic vein angiogenesis by acting as a receptor for apln hormone. Plays a role in various processes in adults such as regulation of blood vessel formation, blood pressure, heart contractility and heart failure. Acts redundantly with agtrl1a in heart development. Functionally, g protein-coupled receptor for peptide hormones apelin (APLN) and apelin receptor early endogenous ligand (APELA/ELA), that plays a role in the regulation of normal cardiovascular function and fluid homeostasis. When acting as apelin receptor, activates both G(i) protein pathway that inhibits adenylate cyclase activity, and the beta-arrestin pathway that promotes internalization of the receptor. APLNR/APJ also functions as mechanoreceptor that is activated by pathological stimuli in a G-protein-independent fashion to induce beta-arrestin signaling, hence eliciting cardiac hypertrophy. Plays a key role in early development such as gastrulation, blood vessels formation and heart morphogenesis by acting as a APELA receptor. May promote angioblast migration toward the embryonic midline, i.e. the position of the future vessel formation, during vasculogenesis. Promotes sinus venosus (SV)-derived endothelial cells migration into the developing heart to promote coronary blood vessel development. Also plays a role in various processes in adults such as regulation of blood vessel formation, blood pressure, heart contractility and heart failure. This is Apelin receptor B (aplnrb) from Danio rerio (Zebrafish).